Here is a 651-residue protein sequence, read N- to C-terminus: Acetyl-coenzyme A synthetase (651 aa).

Residues 189–192, Thr311, and Asn335 contribute to the CoA site; that span reads RGGK. ATP-binding positions include 387 to 389, 411 to 416, Asp500, and Arg515; these read GEP and DTWWQT. Ser523 provides a ligand contact to CoA. Arg526 provides a ligand contact to ATP. Mg(2+)-binding residues include Val537, His539, and Val542. Arg586 lines the CoA pocket. Lys611 is subject to N6-acetyllysine.

This sequence belongs to the ATP-dependent AMP-binding enzyme family. Requires Mg(2+) as cofactor. Acetylated. Deacetylation by the SIR2-homolog deacetylase activates the enzyme.

It catalyses the reaction acetate + ATP + CoA = acetyl-CoA + AMP + diphosphate. Its function is as follows. Catalyzes the conversion of acetate into acetyl-CoA (AcCoA), an essential intermediate at the junction of anabolic and catabolic pathways. AcsA undergoes a two-step reaction. In the first half reaction, AcsA combines acetate with ATP to form acetyl-adenylate (AcAMP) intermediate. In the second half reaction, it can then transfer the acetyl group from AcAMP to the sulfhydryl group of CoA, forming the product AcCoA. The protein is Acetyl-coenzyme A synthetase of Brucella suis (strain ATCC 23445 / NCTC 10510).